Consider the following 371-residue polypeptide: Queuine tRNA-ribosyltransferase (371 aa).

Asp93 acts as the Proton acceptor in catalysis. Substrate-binding positions include 93–97 (DSGGF), Asp147, Gln191, and Gly218. The segment at 249–255 (GVGTPLD) is RNA binding. The active-site Nucleophile is Asp268. The RNA binding; important for wobble base 34 recognition stretch occupies residues 273 to 277 (TRNAR). 4 residues coordinate Zn(2+): Cys306, Cys308, Cys311, and His337.

It belongs to the queuine tRNA-ribosyltransferase family. As to quaternary structure, homodimer. Within each dimer, one monomer is responsible for RNA recognition and catalysis, while the other monomer binds to the replacement base PreQ1. The cofactor is Zn(2+).

The catalysed reaction is 7-aminomethyl-7-carbaguanine + guanosine(34) in tRNA = 7-aminomethyl-7-carbaguanosine(34) in tRNA + guanine. It functions in the pathway tRNA modification; tRNA-queuosine biosynthesis. Catalyzes the base-exchange of a guanine (G) residue with the queuine precursor 7-aminomethyl-7-deazaguanine (PreQ1) at position 34 (anticodon wobble position) in tRNAs with GU(N) anticodons (tRNA-Asp, -Asn, -His and -Tyr). Catalysis occurs through a double-displacement mechanism. The nucleophile active site attacks the C1' of nucleotide 34 to detach the guanine base from the RNA, forming a covalent enzyme-RNA intermediate. The proton acceptor active site deprotonates the incoming PreQ1, allowing a nucleophilic attack on the C1' of the ribose to form the product. After dissociation, two additional enzymatic reactions on the tRNA convert PreQ1 to queuine (Q), resulting in the hypermodified nucleoside queuosine (7-(((4,5-cis-dihydroxy-2-cyclopenten-1-yl)amino)methyl)-7-deazaguanosine). The sequence is that of Queuine tRNA-ribosyltransferase from Lawsonia intracellularis (strain PHE/MN1-00).